Reading from the N-terminus, the 71-residue chain is DNA-directed RNA polymerase subunit epsilon (71 aa).

It belongs to the RNA polymerase subunit epsilon family. As to quaternary structure, RNAP is composed of a core of 2 alpha, a beta and a beta' subunit. The core is associated with a delta subunit, and at least one of epsilon or omega. When a sigma factor is associated with the core the holoenzyme is formed, which can initiate transcription.

It catalyses the reaction RNA(n) + a ribonucleoside 5'-triphosphate = RNA(n+1) + diphosphate. Functionally, a non-essential component of RNA polymerase (RNAP). In Geobacillus thermodenitrificans (strain NG80-2), this protein is DNA-directed RNA polymerase subunit epsilon.